A 117-amino-acid polypeptide reads, in one-letter code: Large ribosomal subunit protein uL18 (117 aa).

It belongs to the universal ribosomal protein uL18 family. In terms of assembly, part of the 50S ribosomal subunit; part of the 5S rRNA/L5/L18/L25 subcomplex. Contacts the 5S and 23S rRNAs.

Its function is as follows. This is one of the proteins that bind and probably mediate the attachment of the 5S RNA into the large ribosomal subunit, where it forms part of the central protuberance. The chain is Large ribosomal subunit protein uL18 from Histophilus somni (strain 129Pt) (Haemophilus somnus).